A 328-amino-acid polypeptide reads, in one-letter code: Malate dehydrogenase (328 aa).

12–18 is a binding site for NAD(+); that stretch reads GAAGQIG. Residues Arg93 and Arg99 each coordinate substrate. Residues Asn106, Gln113, and 130–132 contribute to the NAD(+) site; that span reads VGN. Asn132 and Arg163 together coordinate substrate. The active-site Proton acceptor is His188.

This sequence belongs to the LDH/MDH superfamily. MDH type 2 family.

The catalysed reaction is (S)-malate + NAD(+) = oxaloacetate + NADH + H(+). In terms of biological role, catalyzes the reversible oxidation of malate to oxaloacetate. The chain is Malate dehydrogenase from Saccharopolyspora erythraea (strain ATCC 11635 / DSM 40517 / JCM 4748 / NBRC 13426 / NCIMB 8594 / NRRL 2338).